Reading from the N-terminus, the 200-residue chain is Recombination protein RecR (200 aa).

Residues cysteine 58–cysteine 75 form a C4-type zinc finger. The 96-residue stretch at serine 82–proline 177 folds into the Toprim domain.

The protein belongs to the RecR family.

May play a role in DNA repair. It seems to be involved in an RecBC-independent recombinational process of DNA repair. It may act with RecF and RecO. This is Recombination protein RecR from Chlamydia trachomatis serovar L2 (strain ATCC VR-902B / DSM 19102 / 434/Bu).